Reading from the N-terminus, the 438-residue chain is Mitochondrial distribution and morphology protein 12 (438 aa).

The region spanning 1–438 (MSIEVDWAAA…VYPSFWTFLV (438 aa)) is the SMP-LTD domain. 3 disordered regions span residues 110-154 (SFSH…TSTL), 185-277 (SDSG…MRER), and 353-379 (GSEQSQGSQNPSDDGRPRSGGDQKDKE). Residues 212–226 (DTTNSTSRPSTANTL) are compositionally biased toward polar residues. Over residues 227–245 (PSHPSLGHSGSSGSNPHTS) the composition is skewed to low complexity. The span at 354 to 364 (SEQSQGSQNPS) shows a compositional bias: polar residues. A compositionally biased stretch (basic and acidic residues) spans 365 to 379 (DDGRPRSGGDQKDKE).

This sequence belongs to the MDM12 family. Component of the ER-mitochondria encounter structure (ERMES) or MDM complex, composed of mmm1, mdm10, mdm12 and mdm34. A mmm1 homodimer associates with one molecule of mdm12 on each side in a pairwise head-to-tail manner, and the SMP-LTD domains of mmm1 and mdm12 generate a continuous hydrophobic tunnel for phospholipid trafficking.

It localises to the mitochondrion outer membrane. The protein resides in the endoplasmic reticulum membrane. Component of the ERMES/MDM complex, which serves as a molecular tether to connect the endoplasmic reticulum (ER) and mitochondria. Components of this complex are involved in the control of mitochondrial shape and protein biogenesis, and function in nonvesicular lipid trafficking between the ER and mitochondria. Mdm12 is required for the interaction of the ER-resident membrane protein mmm1 and the outer mitochondrial membrane-resident beta-barrel protein mdm10. The mdm12-mmm1 subcomplex functions in the major beta-barrel assembly pathway that is responsible for biogenesis of all mitochondrial outer membrane beta-barrel proteins, and acts in a late step after the SAM complex. The mdm10-mdm12-mmm1 subcomplex further acts in the TOM40-specific pathway after the action of the mdm12-mmm1 complex. Essential for establishing and maintaining the structure of mitochondria and maintenance of mtDNA nucleoids. The polypeptide is Mitochondrial distribution and morphology protein 12 (Penicillium rubens (strain ATCC 28089 / DSM 1075 / NRRL 1951 / Wisconsin 54-1255) (Penicillium chrysogenum)).